A 233-amino-acid polypeptide reads, in one-letter code: Chromosome partition protein MukE (233 aa).

Positions 207-233 (SLSLHDESDDADVTMGNAADSVEDEQE) are disordered.

It belongs to the MukE family. Interacts, and probably forms a ternary complex, with MukF and MukB. The complex formation is stimulated by calcium or magnesium.

The protein resides in the cytoplasm. It is found in the nucleoid. Involved in chromosome condensation, segregation and cell cycle progression. May participate in facilitating chromosome segregation by condensation DNA from both sides of a centrally located replisome during cell division. Probably acts via its interaction with MukB and MukF. This Yersinia pestis protein is Chromosome partition protein MukE.